We begin with the raw amino-acid sequence, 371 residues long: Cyclic AMP-responsive element-binding protein 3 (371 aa).

The interval methionine 1–leucine 92 is transcription activation (acidic). Topologically, residues methionine 1–cysteine 230 are cytoplasmic. 2 short sequence motifs (LXXLL motif) span residues leucine 13–leucine 17 and leucine 54–leucine 58. An HCFC1-binding-motif (HBM) motif is present at residues aspartate 78 to tyrosine 81. The bZIP domain occupies isoleucine 150–leucine 213. A basic motif region spans residues lysine 152–lysine 184. Residues leucine 192–leucine 213 form a leucine-zipper region. The helical; Signal-anchor for type II membrane protein transmembrane segment at isoleucine 231 to tyrosine 247 threads the bilayer. Residues serine 248–glycine 371 lie on the Lumenal side of the membrane. Residues asparagine 307 and asparagine 348 are each glycosylated (N-linked (GlcNAc...) asparagine).

It belongs to the bZIP family. ATF subfamily. As to quaternary structure, homodimer. Isoform 1 interacts with HCFC1; the interaction is required to stimulate CREB3 transcriptional activity. Isoform 1 interacts with CREBZF; the interaction occurs only in combination with HCFC1. Isoform 1 interacts (via central part and transmembrane region) with DCSTAMP (via C-terminus cytoplasmic domain). Isoform 1 interacts with OS9. Isoform 1 interacts (via leucine-zipper domain) with CREBRF (via leucine-zipper domain); the interaction occurs only after CREB3 activation and promotes CREB3 degradation. Isoform 1 interacts (via C-terminal domain) with CCR1. (Microbial infection) Interacts with the HCV core protein; homodimerization is prevented by the HCV core protein. Isoform 1 interacts (via leucine-zipper and transmembrane domains) with HIV-1 TMgp41 (via cytoplasmic domain); the interaction reduces CREB3 stability. Processed cyclic AMP-responsive element-binding protein 3 interacts with HIV-1 Tat. In terms of processing, first proteolytically cleaved by site-1 protease (S1P) that generates membrane-associated N-terminus and a luminal C-terminus forms. The membrane-associated N-terminus form is further proteolytically processed probably by the site-2 protease (S2P) through a regulated intramembrane proteolysis (RIP), releasing the transcriptional active processed cyclic AMP-responsive element-binding protein 3 form, which is transported to the nucleus. The proteolytic cleavage is strongly induced during dendritic cell (DC) maturation and inhibited by DCSTAMP. That form is rapidly degraded. Post-translationally, N-glycosylated. Ubiquitously expressed. Expressed in dendritic cells (DC). Weakly expressed in monocytes (at protein level).

The protein resides in the endoplasmic reticulum membrane. It is found in the golgi apparatus. Its subcellular location is the cytoplasm. The protein localises to the nucleus. In terms of biological role, endoplasmic reticulum (ER)-bound sequence-specific transcription factor that directly binds DNA and activates transcription. Plays a role in the unfolded protein response (UPR), promoting cell survival versus ER stress-induced apoptotic cell death. Also involved in cell proliferation, migration and differentiation, tumor suppression and inflammatory gene expression. Acts as a positive regulator of LKN-1/CCL15-induced chemotaxis signaling of leukocyte cell migration. Associates with chromatin to the HERPUD1 promoter. Also induces transcriptional activation of chemokine receptors. (Microbial infection) Plays a role in human immunodeficiency virus type 1 (HIV-1) virus protein expression. Its function is as follows. (Microbial infection) May play a role as a cellular tumor suppressor that is targeted by the hepatitis C virus (HCV) core protein. Functionally, (Microbial infection) Plays a role in herpes simplex virus-1 (HSV-1) latent infection and reactivation from latency. Represses the VP16-mediated transactivation of immediate early genes of the HSV-1 virus by sequestering host cell factor-1 HCFC1 in the ER membrane of sensory neurons, thereby preventing the initiation of the replicative cascade leading to latent infection. In terms of biological role, functions as a negative transcriptional regulator in ligand-induced transcriptional activation of the glucocorticoid receptor NR3C1 by recruiting and activating histone deacetylases (HDAC1, HDAC2 and HDAC6). Also decreases the acetylation level of histone H4. Does not promote the chemotactic activity of leukocyte cells. This is the transcriptionally active form that translocates to the nucleus and activates unfolded protein response (UPR) target genes during endoplasmic reticulum (ER) stress response. Binds the cAMP response element (CRE) (consensus: 5'-GTGACGT[AG][AG]-3') and C/EBP sequences present in many promoters to activate transcription of the genes. Binds to the unfolded protein response element (UPRE) consensus sequences sites. Binds DNA to the 5'-CCAC[GA]-3'half of ERSE II (5'-ATTGG-N-CCACG-3'). Its function is as follows. (Microbial infection) Activates transcription of genes required for reactivation of the latent HSV-1 virus. It's transcriptional activity is inhibited by CREBZF in a HCFC1-dependent manner, by the viral transactivator protein VP16. Binds DNA to the cAMP response element (CRE) (consensus: 5'-GTGACGT[AG][AG]-3') and C/EBP sequences present in many viral promoters. Functionally, (Microbial infection) It's transcriptional activity is inhibited by CREBZF in a HCFC1-dependent manner, by the viral transactivator HCV core protein. This chain is Cyclic AMP-responsive element-binding protein 3 (CREB3), found in Homo sapiens (Human).